The primary structure comprises 573 residues: Myrcene synthase TPS5FN (573 aa).

Positions 286, 323, 327, 464, and 467 each coordinate (2E)-geranyl diphosphate. Aspartate 323 and aspartate 327 together coordinate Mg(2+). Residues 323–327 carry the DDXXD motif motif; the sequence is DDIFD. Aspartate 467, threonine 471, and glutamate 475 together coordinate Mg(2+).

The protein belongs to the terpene synthase family. Tpsb subfamily. Mg(2+) is required as a cofactor. The cofactor is Mn(2+). In terms of tissue distribution, expressed in glandular trichomes two to four weeks after flowering onset.

It catalyses the reaction (2E)-geranyl diphosphate = beta-myrcene + diphosphate. The catalysed reaction is (2E)-geranyl diphosphate = (1R,5R)-alpha-pinene + diphosphate. It carries out the reaction (2E)-geranyl diphosphate = sabinene + diphosphate. The enzyme catalyses (2E)-geranyl diphosphate = (4S)-limonene + diphosphate. It catalyses the reaction (2E)-geranyl diphosphate = terpinolene + diphosphate. The catalysed reaction is (2E)-geranyl diphosphate = camphene + diphosphate. The protein operates within secondary metabolite biosynthesis; terpenoid biosynthesis. In terms of biological role, involved in monoterpene (C10) olefins biosynthesis, constituants of cannabinoids and terpenoids-rich resins. Catalyzes mainly the conversion of (2E)-geranyl diphosphate to beta-myrcene, and also produces minor products such as alpha-pinene, camphene, sabinene, limonene and terpinolene. The sequence is that of Myrcene synthase TPS5FN from Cannabis sativa (Hemp).